The sequence spans 307 residues: Aspartate carbamoyltransferase catalytic subunit (307 aa).

The carbamoyl phosphate site is built by Arg54 and Thr55. Residue Lys83 participates in L-aspartate binding. 3 residues coordinate carbamoyl phosphate: Arg104, His132, and Gln135. 2 residues coordinate L-aspartate: Arg165 and Arg228. Leu267 and Pro268 together coordinate carbamoyl phosphate.

It belongs to the aspartate/ornithine carbamoyltransferase superfamily. ATCase family. Heterododecamer (2C3:3R2) of six catalytic PyrB chains organized as two trimers (C3), and six regulatory PyrI chains organized as three dimers (R2).

It carries out the reaction carbamoyl phosphate + L-aspartate = N-carbamoyl-L-aspartate + phosphate + H(+). It participates in pyrimidine metabolism; UMP biosynthesis via de novo pathway; (S)-dihydroorotate from bicarbonate: step 2/3. In terms of biological role, catalyzes the condensation of carbamoyl phosphate and aspartate to form carbamoyl aspartate and inorganic phosphate, the committed step in the de novo pyrimidine nucleotide biosynthesis pathway. This is Aspartate carbamoyltransferase catalytic subunit from Clostridium botulinum (strain Loch Maree / Type A3).